Here is a 245-residue protein sequence, read N- to C-terminus: tRNA pseudouridine synthase A 2 (245 aa).

Aspartate 53 acts as the Nucleophile in catalysis. Substrate is bound at residue tyrosine 111.

It belongs to the tRNA pseudouridine synthase TruA family. In terms of assembly, homodimer.

It carries out the reaction uridine(38/39/40) in tRNA = pseudouridine(38/39/40) in tRNA. In terms of biological role, formation of pseudouridine at positions 38, 39 and 40 in the anticodon stem and loop of transfer RNAs. In Bacillus cereus (strain ATCC 10987 / NRS 248), this protein is tRNA pseudouridine synthase A 2.